Here is a 175-residue protein sequence, read N- to C-terminus: Large ribosomal subunit protein uL10 (175 aa).

Belongs to the universal ribosomal protein uL10 family. In terms of assembly, part of the ribosomal stalk of the 50S ribosomal subunit. The N-terminus interacts with L11 and the large rRNA to form the base of the stalk. The C-terminus forms an elongated spine to which L12 dimers bind in a sequential fashion forming a multimeric L10(L12)X complex.

In terms of biological role, forms part of the ribosomal stalk, playing a central role in the interaction of the ribosome with GTP-bound translation factors. The polypeptide is Large ribosomal subunit protein uL10 (Desulfotalea psychrophila (strain LSv54 / DSM 12343)).